The sequence spans 615 residues: ATP-dependent zinc metalloprotease FtsH (615 aa).

At 1–8 the chain is on the cytoplasmic side; the sequence is MAMNKDKP. The helical transmembrane segment at 9–29 threads the bilayer; that stretch reads WTLYLLAVGLAVLAAVQFGLF. Residues 30 to 104 lie on the Periplasmic side of the membrane; the sequence is SQPAVQAIPY…FSGVVEDNTV (75 aa). Residues 105-125 form a helical membrane-spanning segment; that stretch reads ATVMGALMPLLMLLALWYFLF. At 126 to 615 the chain is on the cytoplasmic side; sequence HGLGQKQGLG…ATYVLVDATK (490 aa). 198–205 is a binding site for ATP; the sequence is GPPGTGKT. Position 420 (His-420) interacts with Zn(2+). Residue Glu-421 is part of the active site. Positions 424 and 497 each coordinate Zn(2+).

The protein in the central section; belongs to the AAA ATPase family. It in the C-terminal section; belongs to the peptidase M41 family. Homohexamer. Zn(2+) serves as cofactor.

Its subcellular location is the cell inner membrane. In terms of biological role, acts as a processive, ATP-dependent zinc metallopeptidase for both cytoplasmic and membrane proteins. Plays a role in the quality control of integral membrane proteins. The polypeptide is ATP-dependent zinc metalloprotease FtsH (Pseudomonas putida (strain ATCC 700007 / DSM 6899 / JCM 31910 / BCRC 17059 / LMG 24140 / F1)).